A 212-amino-acid polypeptide reads, in one-letter code: High frequency lysogenization protein HflD homolog (212 aa).

Belongs to the HflD family.

It localises to the cytoplasm. The protein resides in the cell inner membrane. The protein is High frequency lysogenization protein HflD homolog of Stutzerimonas stutzeri (strain A1501) (Pseudomonas stutzeri).